The primary structure comprises 196 residues: Protein LIGHT-DEPENDENT SHORT HYPOCOTYLS 6 (196 aa).

The span at 1–16 (MESADSGRSDPVKGDD) shows a compositional bias: basic and acidic residues. Disordered stretches follow at residues 1–36 (MESA…ESQK) and 149–196 (ARGI…AVPP). Residues 31–158 (RYESQKRRDW…ARGIPYEKKK (128 aa)) form the ALOG domain. A Nuclear localization signal motif is present at residues 156-160 (KKKRK).

This sequence belongs to the plant homeotic and developmental regulators ALOG protein family.

The protein localises to the nucleus. In terms of biological role, probable transcription regulator that acts as a developmental regulator by promoting cell growth in response to light. The chain is Protein LIGHT-DEPENDENT SHORT HYPOCOTYLS 6 (LSH6) from Arabidopsis thaliana (Mouse-ear cress).